The sequence spans 424 residues: Serine--tRNA ligase (424 aa).

L-serine is bound at residue 230 to 232; the sequence is TSE. ATP-binding positions include 261 to 263 and V277; that span reads RKE. Residue E284 participates in L-serine binding. 348–351 contacts ATP; that stretch reads ELTS. T382 serves as a coordination point for L-serine.

Belongs to the class-II aminoacyl-tRNA synthetase family. Type-1 seryl-tRNA synthetase subfamily. In terms of assembly, homodimer. The tRNA molecule binds across the dimer.

It is found in the cytoplasm. It catalyses the reaction tRNA(Ser) + L-serine + ATP = L-seryl-tRNA(Ser) + AMP + diphosphate + H(+). The enzyme catalyses tRNA(Sec) + L-serine + ATP = L-seryl-tRNA(Sec) + AMP + diphosphate + H(+). It participates in aminoacyl-tRNA biosynthesis; selenocysteinyl-tRNA(Sec) biosynthesis; L-seryl-tRNA(Sec) from L-serine and tRNA(Sec): step 1/1. Catalyzes the attachment of serine to tRNA(Ser). Is also able to aminoacylate tRNA(Sec) with serine, to form the misacylated tRNA L-seryl-tRNA(Sec), which will be further converted into selenocysteinyl-tRNA(Sec). This chain is Serine--tRNA ligase, found in Nocardioides sp. (strain ATCC BAA-499 / JS614).